The chain runs to 172 residues: GTP-dependent dephospho-CoA kinase (172 aa).

Residues aspartate 40, valine 41, valine 42, aspartate 59, and glutamate 112 each coordinate GTP.

This sequence belongs to the GTP-dependent DPCK family.

The catalysed reaction is 3'-dephospho-CoA + GTP = GDP + CoA + H(+). Its pathway is cofactor biosynthesis; coenzyme A biosynthesis. Functionally, catalyzes the GTP-dependent phosphorylation of the 3'-hydroxyl group of dephosphocoenzyme A to form coenzyme A (CoA). The protein is GTP-dependent dephospho-CoA kinase of Methanospirillum hungatei JF-1 (strain ATCC 27890 / DSM 864 / NBRC 100397 / JF-1).